The chain runs to 665 residues: Methionine--tRNA ligase (665 aa).

Residues 16–26 carry the 'HIGH' region motif; that stretch reads YYPSGKAHIGH. The 'KMSKS' region motif lies at 311-315; sequence KMSKS. K314 provides a ligand contact to ATP. Residues 564 to 665 enclose the tRNA-binding domain; the sequence is DFDKIDLRVA…SALPNGAKVK (102 aa).

The protein belongs to the class-I aminoacyl-tRNA synthetase family. MetG type 2B subfamily. Homodimer.

It is found in the cytoplasm. The catalysed reaction is tRNA(Met) + L-methionine + ATP = L-methionyl-tRNA(Met) + AMP + diphosphate. Functionally, is required not only for elongation of protein synthesis but also for the initiation of all mRNA translation through initiator tRNA(fMet) aminoacylation. The chain is Methionine--tRNA ligase from Listeria monocytogenes serotype 4b (strain F2365).